The sequence spans 163 residues: NADH-quinone oxidoreductase subunit I (163 aa).

2 consecutive 4Fe-4S ferredoxin-type domains span residues 53–83 and 94–123; these read LRRY…IEAG and VRYD…EGPN. Cysteine 63, cysteine 66, cysteine 69, cysteine 73, cysteine 103, cysteine 106, cysteine 109, and cysteine 113 together coordinate [4Fe-4S] cluster.

Belongs to the complex I 23 kDa subunit family. In terms of assembly, NDH-1 is composed of 14 different subunits. Subunits NuoA, H, J, K, L, M, N constitute the membrane sector of the complex. Requires [4Fe-4S] cluster as cofactor.

The protein localises to the cell inner membrane. The catalysed reaction is a quinone + NADH + 5 H(+)(in) = a quinol + NAD(+) + 4 H(+)(out). Functionally, NDH-1 shuttles electrons from NADH, via FMN and iron-sulfur (Fe-S) centers, to quinones in the respiratory chain. The immediate electron acceptor for the enzyme in this species is believed to be ubiquinone. Couples the redox reaction to proton translocation (for every two electrons transferred, four hydrogen ions are translocated across the cytoplasmic membrane), and thus conserves the redox energy in a proton gradient. This chain is NADH-quinone oxidoreductase subunit I, found in Allorhizobium ampelinum (strain ATCC BAA-846 / DSM 112012 / S4) (Agrobacterium vitis (strain S4)).